Here is a 343-residue protein sequence, read N- to C-terminus: Probable dual-specificity RNA methyltransferase RlmN (343 aa).

Catalysis depends on Glu83, which acts as the Proton acceptor. Residues 89–323 (YLDRKTICVS…VSVRRSRGKD (235 aa)) enclose the Radical SAM core domain. A disulfide bridge connects residues Cys96 and Cys328. [4Fe-4S] cluster contacts are provided by Cys103, Cys107, and Cys110. Residues 153-154 (GE), Ser185, 209-211 (SLH), and Asn285 contribute to the S-adenosyl-L-methionine site. The S-methylcysteine intermediate role is filled by Cys328.

It belongs to the radical SAM superfamily. RlmN family. [4Fe-4S] cluster is required as a cofactor.

The protein resides in the cytoplasm. The catalysed reaction is adenosine(2503) in 23S rRNA + 2 reduced [2Fe-2S]-[ferredoxin] + 2 S-adenosyl-L-methionine = 2-methyladenosine(2503) in 23S rRNA + 5'-deoxyadenosine + L-methionine + 2 oxidized [2Fe-2S]-[ferredoxin] + S-adenosyl-L-homocysteine. The enzyme catalyses adenosine(37) in tRNA + 2 reduced [2Fe-2S]-[ferredoxin] + 2 S-adenosyl-L-methionine = 2-methyladenosine(37) in tRNA + 5'-deoxyadenosine + L-methionine + 2 oxidized [2Fe-2S]-[ferredoxin] + S-adenosyl-L-homocysteine. Specifically methylates position 2 of adenine 2503 in 23S rRNA and position 2 of adenine 37 in tRNAs. In Deinococcus deserti (strain DSM 17065 / CIP 109153 / LMG 22923 / VCD115), this protein is Probable dual-specificity RNA methyltransferase RlmN.